Consider the following 399-residue polypeptide: Nicotinate phosphoribosyltransferase (399 aa).

Residue His217 is modified to Phosphohistidine; by autocatalysis.

This sequence belongs to the NAPRTase family. In terms of processing, transiently phosphorylated on a His residue during the reaction cycle. Phosphorylation strongly increases the affinity for substrates and increases the rate of nicotinate D-ribonucleotide production. Dephosphorylation regenerates the low-affinity form of the enzyme, leading to product release.

The enzyme catalyses nicotinate + 5-phospho-alpha-D-ribose 1-diphosphate + ATP + H2O = nicotinate beta-D-ribonucleotide + ADP + phosphate + diphosphate. Its pathway is cofactor biosynthesis; NAD(+) biosynthesis; nicotinate D-ribonucleotide from nicotinate: step 1/1. In terms of biological role, catalyzes the synthesis of beta-nicotinate D-ribonucleotide from nicotinate and 5-phospho-D-ribose 1-phosphate at the expense of ATP. In Burkholderia cenocepacia (strain HI2424), this protein is Nicotinate phosphoribosyltransferase.